The sequence spans 425 residues: Serine--tRNA ligase (425 aa).

Position 233 to 235 (233 to 235 (TAE)) interacts with L-serine. ATP is bound at residue 264–266 (RRE). E287 is a binding site for L-serine. 351-354 (EISS) contacts ATP. Position 385 (S385) interacts with L-serine.

Belongs to the class-II aminoacyl-tRNA synthetase family. Type-1 seryl-tRNA synthetase subfamily. As to quaternary structure, homodimer. The tRNA molecule binds across the dimer.

It localises to the cytoplasm. It carries out the reaction tRNA(Ser) + L-serine + ATP = L-seryl-tRNA(Ser) + AMP + diphosphate + H(+). It catalyses the reaction tRNA(Sec) + L-serine + ATP = L-seryl-tRNA(Sec) + AMP + diphosphate + H(+). It participates in aminoacyl-tRNA biosynthesis; selenocysteinyl-tRNA(Sec) biosynthesis; L-seryl-tRNA(Sec) from L-serine and tRNA(Sec): step 1/1. Functionally, catalyzes the attachment of serine to tRNA(Ser). Is also able to aminoacylate tRNA(Sec) with serine, to form the misacylated tRNA L-seryl-tRNA(Sec), which will be further converted into selenocysteinyl-tRNA(Sec). In Prochlorococcus marinus (strain MIT 9515), this protein is Serine--tRNA ligase.